We begin with the raw amino-acid sequence, 59 residues long: uncharacterized protein (59 aa).

Residue 33–40 participates in ATP binding; sequence GRRRVGKT.

This is an uncharacterized protein from Methanocaldococcus jannaschii (strain ATCC 43067 / DSM 2661 / JAL-1 / JCM 10045 / NBRC 100440) (Methanococcus jannaschii).